A 122-amino-acid chain; its full sequence is UPF0102 protein Dred_2035 (122 aa).

It belongs to the UPF0102 family.

This Desulforamulus reducens (strain ATCC BAA-1160 / DSM 100696 / MI-1) (Desulfotomaculum reducens) protein is UPF0102 protein Dred_2035.